The chain runs to 392 residues: Queuine tRNA-ribosyltransferase (392 aa).

Asp-93 functions as the Proton acceptor in the catalytic mechanism. Substrate is bound by residues 93–97 (DSGGY), Asp-147, Gln-189, and Gly-216. The interval 247–253 (GVGAPED) is RNA binding. The active-site Nucleophile is the Asp-266. The segment at 271–275 (TRVAR) is RNA binding; important for wobble base 34 recognition. 4 residues coordinate Zn(2+): Cys-304, Cys-306, Cys-309, and His-335.

Belongs to the queuine tRNA-ribosyltransferase family. In terms of assembly, homodimer. Within each dimer, one monomer is responsible for RNA recognition and catalysis, while the other monomer binds to the replacement base PreQ1. Zn(2+) serves as cofactor.

The enzyme catalyses 7-aminomethyl-7-carbaguanine + guanosine(34) in tRNA = 7-aminomethyl-7-carbaguanosine(34) in tRNA + guanine. Its pathway is tRNA modification; tRNA-queuosine biosynthesis. Its function is as follows. Catalyzes the base-exchange of a guanine (G) residue with the queuine precursor 7-aminomethyl-7-deazaguanine (PreQ1) at position 34 (anticodon wobble position) in tRNAs with GU(N) anticodons (tRNA-Asp, -Asn, -His and -Tyr). Catalysis occurs through a double-displacement mechanism. The nucleophile active site attacks the C1' of nucleotide 34 to detach the guanine base from the RNA, forming a covalent enzyme-RNA intermediate. The proton acceptor active site deprotonates the incoming PreQ1, allowing a nucleophilic attack on the C1' of the ribose to form the product. After dissociation, two additional enzymatic reactions on the tRNA convert PreQ1 to queuine (Q), resulting in the hypermodified nucleoside queuosine (7-(((4,5-cis-dihydroxy-2-cyclopenten-1-yl)amino)methyl)-7-deazaguanosine). The protein is Queuine tRNA-ribosyltransferase of Dehalococcoides mccartyi (strain CBDB1).